The following is a 348-amino-acid chain: Flagellar P-ring protein (348 aa).

An N-terminal signal peptide occupies residues 1–16; the sequence is MRVLTIFLLFMTSIFA.

The protein belongs to the FlgI family. The basal body constitutes a major portion of the flagellar organelle and consists of four rings (L,P,S, and M) mounted on a central rod.

The protein resides in the periplasm. It is found in the bacterial flagellum basal body. In terms of biological role, assembles around the rod to form the L-ring and probably protects the motor/basal body from shearing forces during rotation. In Campylobacter jejuni subsp. jejuni serotype O:23/36 (strain 81-176), this protein is Flagellar P-ring protein.